Here is a 303-residue protein sequence, read N- to C-terminus: Methionyl-tRNA formyltransferase (303 aa).

110–113 is a (6S)-5,6,7,8-tetrahydrofolate binding site; it reads SLLP.

The protein belongs to the Fmt family.

It carries out the reaction L-methionyl-tRNA(fMet) + (6R)-10-formyltetrahydrofolate = N-formyl-L-methionyl-tRNA(fMet) + (6S)-5,6,7,8-tetrahydrofolate + H(+). In terms of biological role, attaches a formyl group to the free amino group of methionyl-tRNA(fMet). The formyl group appears to play a dual role in the initiator identity of N-formylmethionyl-tRNA by promoting its recognition by IF2 and preventing the misappropriation of this tRNA by the elongation apparatus. The sequence is that of Methionyl-tRNA formyltransferase from Campylobacter lari (strain RM2100 / D67 / ATCC BAA-1060).